Here is a 66-residue protein sequence, read N- to C-terminus: Large ribosomal subunit protein bL33c (66 aa).

Belongs to the bacterial ribosomal protein bL33 family.

Its subcellular location is the plastid. The protein resides in the chloroplast. In Aethionema grandiflorum (Persian stone-cress), this protein is Large ribosomal subunit protein bL33c.